Consider the following 146-residue polypeptide: Lysozyme C (146 aa).

An N-terminal signal peptide occupies residues 1–16 (SGKYISWEDSCSYLQL). Positions 17-146 (QKYERCELAK…LSQWTQGCKL (130 aa)) constitute a C-type lysozyme domain. Cystine bridges form between cysteine 22-cysteine 144, cysteine 46-cysteine 132, cysteine 81-cysteine 97, and cysteine 93-cysteine 111. Catalysis depends on residues glutamate 51 and aspartate 69.

Belongs to the glycosyl hydrolase 22 family. Expressed by the skin glands.

The protein resides in the secreted. It carries out the reaction Hydrolysis of (1-&gt;4)-beta-linkages between N-acetylmuramic acid and N-acetyl-D-glucosamine residues in a peptidoglycan and between N-acetyl-D-glucosamine residues in chitodextrins.. Functionally, lysozymes have primarily a bacteriolytic function; those in tissues and body fluids are associated with the monocyte-macrophage system and enhance the activity of immunoagents. Has antibacterial activity against the Gram-positive bacterium S.aureus and against the Gram-negative bacterium E.coli with a MIC of 1 uM and 8 uM respectively. No antifungal activity against C.albicans. The chain is Lysozyme C from Bufo gargarizans andrewsi (Andrew's toad).